The following is a 223-amino-acid chain: Deoxyribose-phosphate aldolase 1 (223 aa).

Aspartate 91 serves as the catalytic Proton donor/acceptor. Residue lysine 153 is the Schiff-base intermediate with acetaldehyde of the active site. Lysine 182 functions as the Proton donor/acceptor in the catalytic mechanism.

The protein belongs to the DeoC/FbaB aldolase family. DeoC type 1 subfamily.

The protein resides in the cytoplasm. It catalyses the reaction 2-deoxy-D-ribose 5-phosphate = D-glyceraldehyde 3-phosphate + acetaldehyde. It functions in the pathway carbohydrate degradation; 2-deoxy-D-ribose 1-phosphate degradation; D-glyceraldehyde 3-phosphate and acetaldehyde from 2-deoxy-alpha-D-ribose 1-phosphate: step 2/2. Catalyzes a reversible aldol reaction between acetaldehyde and D-glyceraldehyde 3-phosphate to generate 2-deoxy-D-ribose 5-phosphate. This is Deoxyribose-phosphate aldolase 1 from Yersinia pestis.